The sequence spans 678 residues: DNA ligase (678 aa).

Residues Asp-36–Asp-40, Ser-85–Leu-86, and Glu-117 each bind NAD(+). Lys-119 functions as the N6-AMP-lysine intermediate in the catalytic mechanism. NAD(+) is bound by residues Arg-140, Glu-177, Lys-294, and Lys-318. Positions 412, 415, 430, and 436 each coordinate Zn(2+). Positions Ala-595–Val-678 constitute a BRCT domain.

It belongs to the NAD-dependent DNA ligase family. LigA subfamily. Requires Mg(2+) as cofactor. Mn(2+) serves as cofactor.

The catalysed reaction is NAD(+) + (deoxyribonucleotide)n-3'-hydroxyl + 5'-phospho-(deoxyribonucleotide)m = (deoxyribonucleotide)n+m + AMP + beta-nicotinamide D-nucleotide.. Functionally, DNA ligase that catalyzes the formation of phosphodiester linkages between 5'-phosphoryl and 3'-hydroxyl groups in double-stranded DNA using NAD as a coenzyme and as the energy source for the reaction. It is essential for DNA replication and repair of damaged DNA. The sequence is that of DNA ligase from Marinobacter nauticus (strain ATCC 700491 / DSM 11845 / VT8) (Marinobacter aquaeolei).